Here is a 334-residue protein sequence, read N- to C-terminus: MLKIGIVGGTGYTGGELLRLLSIHPLAEVTVVTSRKQAGQPVDTVHPNLKSLTDLKFEDPDPAKIAERCDVVFTAVPHGAAMAVVPELLKYGLRVIDLSADYRLPTEKFEQVYNKKHLDPREAVYGLPELHPEVKDATLIANPGCYPTGANLACAPLIAQGLVNRAVVDSKSGISGSGQDPTEGTHYPNVTQNVRPYNLTTHRHKAEIEQEMLRLNNSTRIHFTPHVIPSTRGIMTTAHLFVDEPLTTDQVQTIYDEFYKNKPFVRLQKPSLANVRGSNFCDIAFEVEKDSDRIVVVSAIDNMVKGASGQAIQNMNLMYGFDERTGLWTSGLSP.

C145 is an active-site residue. The disordered stretch occupies residues 173 to 192 (GISGSGQDPTEGTHYPNVTQ).

It belongs to the NAGSA dehydrogenase family. Type 1 subfamily.

It is found in the cytoplasm. The enzyme catalyses N-acetyl-L-glutamate 5-semialdehyde + phosphate + NADP(+) = N-acetyl-L-glutamyl 5-phosphate + NADPH + H(+). Its pathway is amino-acid biosynthesis; L-arginine biosynthesis; N(2)-acetyl-L-ornithine from L-glutamate: step 3/4. Catalyzes the NADPH-dependent reduction of N-acetyl-5-glutamyl phosphate to yield N-acetyl-L-glutamate 5-semialdehyde. The sequence is that of N-acetyl-gamma-glutamyl-phosphate reductase from Methanocella arvoryzae (strain DSM 22066 / NBRC 105507 / MRE50).